The chain runs to 1852 residues: Chitin synthase csmA (1852 aa).

The segment at 1–20 (MVGTLPAGHTPSHVQSSLPS) is disordered. In terms of domain architecture, Myosin motor spans 1–787 (MVGTLPAGHT…CWADLAKVGE (787 aa)). Residue N58 is glycosylated (N-linked (GlcNAc...) asparagine). ATP is bound at residue 102 to 109 (GESGAGKT). Residues 599–646 (SSKPLRMPSMARRKTSPASRLTFDATPAEDPYETESQTGSSAKNSSAK) are disordered. N642 carries N-linked (GlcNAc...) asparagine glycosylation. Residues 667-691 (LDIVNKCLTSGNLNPYFVFCLKPND) form an actin-binding region. A glycan (N-linked (GlcNAc...) asparagine) is linked at N840. A run of 2 helical transmembrane segments spans residues 895-915 (WMAIVWLLTFYIPTPAIRYIG) and 930-950 (FAINLLIWLACAIAVFIIVGF). Positions 958 to 1017 (QHVYSPAELSSHDGKDGHSSYTSIRGLVLDLGEFMDSHYPGIVPDSALKKYAGVDSTALF) constitute a Cytochrome b5 heme-binding domain. N-linked (GlcNAc...) asparagine glycosylation is found at N1044 and N1195. A helical membrane pass occupies residues 1205–1225 (FILAISVLICSVIVFKFFAAL). Residues N1428, N1462, and N1568 are each glycosylated (N-linked (GlcNAc...) asparagine). Transmembrane regions (helical) follow at residues 1600–1620 (ISTIIMPVTVAYIVYLIVWLV), 1626–1646 (IPWTSFLLLAAIYGLQAIIFI), and 1653–1673 (MIGWMIIYILAIPVYSLALPL). The region spanning 1794–1849 (LPSDDAILSEIRDILRTADLMTVTKKNIKQELERRFGVNLDAKRPYINSATEAVLS) is the DEK-C domain.

This sequence in the N-terminal section; belongs to the TRAFAC class myosin-kinesin ATPase superfamily. Myosin family. In the C-terminal section; belongs to the chitin synthase family. Class V subfamily. As to quaternary structure, binds F-actin via its N-terminal myosin motor-like domain (MMD). Interacts with kibesin kinA.

It is found in the cell membrane. The protein localises to the cell septum. The protein resides in the cell tip. It catalyses the reaction [(1-&gt;4)-N-acetyl-beta-D-glucosaminyl](n) + UDP-N-acetyl-alpha-D-glucosamine = [(1-&gt;4)-N-acetyl-beta-D-glucosaminyl](n+1) + UDP + H(+). In terms of biological role, polymerizes chitin, a structural polymer of the cell wall and septum, by transferring the sugar moiety of UDP-GlcNAc to the non-reducing end of the growing chitin polymer. Plays an important role in polarized hyphal cell wall synthesis and maintenance of cell wall integrity. Its role in growth and morphogenesis is particularly important under low osmotic conditions. This Emericella nidulans (Aspergillus nidulans) protein is Chitin synthase csmA.